The primary structure comprises 157 residues: uncharacterized protein (157 aa).

In terms of domain architecture, N-acetyltransferase spans 3-157 (FTLEDMTEEE…TNIRMRKQLC (155 aa)).

The protein belongs to the acetyltransferase family.

This is an uncharacterized protein from Bacillus subtilis (strain 168).